The sequence spans 1709 residues: Intraflagellar transport protein 122 (1709 aa).

WD repeat units lie at residues 51-89 (TQHPLVTCLAISPDGHMVVSMGTDGAVMFNDSTGAALFK) and 132-171 (SFKGTPRAIAWAPGSDWFVISTQDGDLVIMTPEGMELNSC). The disordered stretch occupies residues 209-229 (TIPQTVTPSASASGRSGSGKR). One copy of the WD 3 repeat lies at 634–673 (LHRSPIVSLDISPDRKYISVVDRSDVVSVYKFLDDSEIVL). Residues 1231–1256 (IEALERLRLSGNTSKEAIIIKQLIDA) form an LRR 1 repeat. Residues 1378-1404 (LSGEDTVKASSQRSKKDNPPSLRSTIG) are disordered. The stretch at 1414 to 1436 (LGSLAHIDLGINNMNIPPGISEL) is one LRR 2 repeat.

It localises to the cell projection. Its subcellular location is the cilium. It is found in the flagellum. The protein localises to the cytoplasm. The protein resides in the cytoskeleton. It localises to the flagellum axoneme. Its subcellular location is the flagellum basal body. Its function is as follows. Component of the intraflagellar transport complex A (IFT-A) involved in flagellar assembly. This is Intraflagellar transport protein 122 from Giardia intestinalis (strain ATCC 50803 / WB clone C6) (Giardia lamblia).